A 486-amino-acid chain; its full sequence is Sensor protein PhoQ (486 aa).

The Cytoplasmic portion of the chain corresponds to 1–16 (MKKLLRLFFPLSLRVR). Residues 17–37 (FLLATAAVVLVLSLAYGMVAL) form a helical membrane-spanning segment. The Periplasmic segment spans residues 38–194 (IGYSVSFDKT…LKSSYMVWSW (157 aa)). A divalent metal cation contacts are provided by D151 and D152. A helical membrane pass occupies residues 195 to 215 (FIYVLSANLLLVIPLLWVAAW). The HAMP domain maps to 215-266 (WWSLRPIEALAKEVRELEEHNRELLNPATTRELTSLVRNLNRLLKSERERYD). Residues 216 to 486 (WSLRPIEALA…GRQHSAPKDE (271 aa)) lie on the Cytoplasmic side of the membrane. Residues 274 to 480 (DLTHSLKTPL…RMEVIFGRQH (207 aa)) enclose the Histidine kinase domain. Residue H277 is modified to Phosphohistidine; by autocatalysis. Residue N385 coordinates Mg(2+). ATP contacts are provided by residues 385 to 393 (NVLDNACKY), 415 to 420 (DDGPGI), and 434 to 446 (RVDT…GVGL). Q442 lines the Mg(2+) pocket.

In terms of assembly, homodimer; probably dimerizes via the cytoplasmic domain. Probably interacts with MgrB in the periplasm, altering its activity and that of downstream effector PhoP.

It is found in the cell inner membrane. It carries out the reaction ATP + protein L-histidine = ADP + protein N-phospho-L-histidine.. Its activity is regulated as follows. Acetyl-CoA acts as a non-competitive inhibitor of the PhoQ autokinase activity. Feedback inhibited by MgrB, which seems to bind PhoQ, altering its activity and that of downstream effector PhoP. Member of the two-component regulatory system PhoP/PhoQ involved in adaptation to low Mg(2+) environments and the control of acid resistance genes. In low periplasmic Mg(2+), PhoQ functions as a membrane-associated protein kinase that undergoes autophosphorylation and subsequently transfers the phosphate to PhoP, resulting in the expression of PhoP-activated genes (PAG) and repression of PhoP-repressed genes (PRG). In high periplasmic Mg(2+), acts as a protein phosphatase that dephosphorylates phospho-PhoP, resulting in the repression of PAG and may lead to expression of some PRG. PhoP-regulated transcription is redox-sensitive, being activated when the periplasm becomes more reducing (deletion of dsbA/dsbB, or treatment with dithiothreitol). MgrB acts between DsbA/DsbB and PhoP/PhoQ in this pathway; the 2 periplasmic Cys residues of MgrB are required for its action on PhoQ, which then acts on PhoP. Mediates magnesium influx to the cytosol by activation of mgtA. Promotes expression of the two-component regulatory system rstA/rstB and transcription of the hemL, mgrB, nagA, slyB, vboR and yrbL genes. The chain is Sensor protein PhoQ (phoQ) from Escherichia coli (strain K12).